The sequence spans 478 residues: Cytochrome c-552 (478 aa).

Residues 1–26 (MARKTLRARRFFSLIFPFFFMTSVYA) form the signal peptide. Residue His94 participates in heme c binding. Cys122, Cys125, and Lys126 together coordinate heme. Positions 160, 163, 164, 209, 212, and 213 each coordinate heme c. Ca(2+)-binding residues include Glu215, Tyr216, Lys261, and Gln263. Tyr216 lines the substrate pocket. His264 lines the substrate pocket. Residues His275, Cys282, Cys285, His286, His301, Cys314, Cys317, His318, and His393 each contribute to the heme c site.

It belongs to the cytochrome c-552 family. Ca(2+) serves as cofactor. Requires heme c as cofactor.

It is found in the periplasm. It catalyses the reaction 6 Fe(III)-[cytochrome c] + NH4(+) + 2 H2O = 6 Fe(II)-[cytochrome c] + nitrite + 8 H(+). The protein operates within nitrogen metabolism; nitrate reduction (assimilation). Catalyzes the reduction of nitrite to ammonia, consuming six electrons in the process. The polypeptide is Cytochrome c-552 (Salmonella arizonae (strain ATCC BAA-731 / CDC346-86 / RSK2980)).